The chain runs to 149 residues: METLYRVPFLVLECPNLKLKKPPWVHMPSAMTVYALVVVSYFLITGGIIYDVIVEPPSVGSMTDEHGHQRPVAFLAYRVNGQYIMEGLASSFLFTMGGLGFIILDRSNAPNIPKLNRFLLLFIGFVCVLLSFFMARVFMRMKLPGYLMG.

Topologically, residues 1-32 (METLYRVPFLVLECPNLKLKKPPWVHMPSAMT) are cytoplasmic. Residues 33–53 (VYALVVVSYFLITGGIIYDVI) traverse the membrane as a helical segment. At 54 to 83 (VEPPSVGSMTDEHGHQRPVAFLAYRVNGQY) the chain is on the extracellular side. The chain crosses the membrane as a helical span at residues 84 to 104 (IMEGLASSFLFTMGGLGFIIL). The Cytoplasmic segment spans residues 105–117 (DRSNAPNIPKLNR). The chain crosses the membrane as a helical span at residues 118 to 138 (FLLLFIGFVCVLLSFFMARVF). The Extracellular portion of the chain corresponds to 139–149 (MRMKLPGYLMG).

The protein belongs to the OSTC family. In terms of assembly, component of STT3A-containing oligosaccharyl transferase (OST-A) complex. STT3A-containing complex assembly occurs through the formation of 3 subcomplexes. Subcomplex 1 contains RPN1 and TMEM258, subcomplex 2 contains the STT3A-specific subunits STT3A, DC2/OSTC, and KCP2 as well as the core subunit OST4, and subcomplex 3 contains RPN2, DAD1, and OST48. The OST-A complex can form stable complexes with the Sec61 complex or with both the Sec61 and TRAP complexes. Interacts with PSEN1 and NCSTN; indicative for an association with the gamma-secretase complex.

The protein localises to the endoplasmic reticulum. Its subcellular location is the membrane. It participates in protein modification; protein glycosylation. Functionally, subunit of STT3A-containing oligosaccharyl transferase (OST-A) complex that catalyzes the initial transfer of a defined glycan (Glc(3)Man(9)GlcNAc(2) in eukaryotes) from the lipid carrier dolichol-pyrophosphate to an asparagine residue within an Asn-X-Ser/Thr consensus motif in nascent polypeptide chains, the first step in protein N-glycosylation. N-glycosylation occurs cotranslationally and the complex associates with the Sec61 complex at the channel-forming translocon complex that mediates protein translocation across the endoplasmic reticulum (ER). Within the OST-A complex, acts as an adapter that anchors the OST-A complex to the Sec61 complex. May be involved in N-glycosylation of APP (amyloid-beta precursor protein). Can modulate gamma-secretase cleavage of APP by enhancing endoprotelysis of PSEN1. This is Oligosaccharyltransferase complex subunit OSTC from Canis lupus familiaris (Dog).